A 236-amino-acid polypeptide reads, in one-letter code: Giant extracellular hemoglobin linker 2 chain (236 aa).

Residues 66 to 108 enclose the LDL-receptor class A domain; sequence NGCEPRHFQCGGSAMECISDLLTCDGSPDCANGADEDSDVCHI. 3 cysteine pairs are disulfide-bonded: C68/C82, C75/C95, and C89/C106.

As to quaternary structure, disulfide-linked dimer of identical chains. A model is proposed for the subunit structure of the Tylorrhynchus hemoglobin, consisting of 216 polypeptides chains, 192 heme-containing chains, and 24 linker chains.

In terms of biological role, acts as a linker for the assembly of heme-containing chains in the construction of giant hemoglobin. This chain is Giant extracellular hemoglobin linker 2 chain, found in Tylorrhynchus heterochetus (Japanese palolo worm).